The following is a 35-amino-acid chain: Z-limacoditoxin(1)-Dv4 (35 aa).

Positions 1 to 22 are cleaved as a signal peptide; the sequence is MKKTFLPIFLVILLASYALGNP. Position 23 is a pyrrolidone carboxylic acid (Q23). At P32 the chain carries Proline amide.

Belongs to the limacoditoxin-1 (ACP-like) family. In terms of tissue distribution, expressed by the venom secretory cell of the spine. The spine is a cuticular structure containing a single large nucleated venom-secreting cell at its base. It is an independent unit capable of producing, storing and injecting venom. On the back of D.vulnerans caterpillars, spines are grouped together by 50 to 100 to form scoli, of which there are eight in D.vulnerans.

It is found in the secreted. Potently activates insect GPCR. More precisely, it activates the ACP receptor (ACPR) from the mosquito A.aegypti (EC(50)=3.07 nM) with a potency comparable to that of the endogenous ligand. Has no activity on receptors of the closely related neuropeptides adipokinetic hormone and corazonin. In vivo, does not reveal any observable effects when injected into crickets (A.domesticus). Does not induce increase in intracellular calcium in mouse DRG neurons, suggesting that it does not induce pain. This chain is Z-limacoditoxin(1)-Dv4, found in Doratifera vulnerans (Mottled cup moth).